The chain runs to 69 residues: MKQGIHPDYRETTVVCTCGNTFTTRSTSQSGTLNADVCSKCHPFYTGKQKILDAGGRVARFERRYGKKN.

Zn(2+) contacts are provided by C16, C18, C38, and C41.

Belongs to the bacterial ribosomal protein bL31 family. Type A subfamily. Part of the 50S ribosomal subunit. The cofactor is Zn(2+).

Functionally, binds the 23S rRNA. The chain is Large ribosomal subunit protein bL31 from Cutibacterium acnes (strain DSM 16379 / KPA171202) (Propionibacterium acnes).